The sequence spans 265 residues: Mlc titration factor A (265 aa).

Zn(2+) contacts are provided by His111, His148, His152, and Glu211.

It belongs to the MtfA family. Interacts with Mlc. Requires Zn(2+) as cofactor.

It is found in the cytoplasm. In terms of biological role, involved in the modulation of the activity of the glucose-phosphotransferase system (glucose-PTS). Interacts with the transcriptional repressor Mlc, preventing its interaction with DNA and leading to the modulation of expression of genes regulated by Mlc, including ptsG, which encodes the PTS system glucose-specific EIICB component. Its function is as follows. Shows zinc-dependent metallopeptidase activity. This chain is Mlc titration factor A, found in Escherichia coli O139:H28 (strain E24377A / ETEC).